The following is a 335-amino-acid chain: DNA-directed RNA polymerase subunit alpha (335 aa).

Residues 1–231 (MVREKITVST…DLLIPFLHTK (231 aa)) are alpha N-terminal domain (alpha-NTD). Residues 263–335 (KKMALKSIFI…FVIDLPKNKF (73 aa)) form an alpha C-terminal domain (alpha-CTD) region.

Belongs to the RNA polymerase alpha chain family. As to quaternary structure, in plastids the minimal PEP RNA polymerase catalytic core is composed of four subunits: alpha, beta, beta', and beta''. When a (nuclear-encoded) sigma factor is associated with the core the holoenzyme is formed, which can initiate transcription.

It is found in the plastid. Its subcellular location is the chloroplast. It carries out the reaction RNA(n) + a ribonucleoside 5'-triphosphate = RNA(n+1) + diphosphate. Its function is as follows. DNA-dependent RNA polymerase catalyzes the transcription of DNA into RNA using the four ribonucleoside triphosphates as substrates. In Lactuca sativa (Garden lettuce), this protein is DNA-directed RNA polymerase subunit alpha.